Reading from the N-terminus, the 470-residue chain is MTSRELYTSSYKKIFGDWGRSSSLLYTTNSSSSTRSQSYRPREAYTSNISSYRKVSRSPGHLSSAQDHFDLSQSTALSNELKIVRTNEKEQLQGLNDRFVTYIEKVHHLEQQNKLLESEVTLLRQKHSEPSRLSHIYEQEIRELRSKLEEQEQDKDQAQLDYEHLGACLEQLKLKLEQESARREEAEDVMKNYRKDLDQATLNRLQLEKKVESLLDEIAFLRKVHEEEIAELQASVQEAQISVEMDVVSKPDLTAALKEIRMQYEVLSARNQQSSEEWYQAKIANVSLEASRNNDSVRQAKEEITEYRRQLQARTLEIDALRSANESLERQLQEAEDRSNEEMSHLQDTIGQLDNALRTTKEEMARHLREYQDLLNVKMALDIEIAAYRKLLEGEETRLTSVGGGSMFGIGYPFSSGSYSGGRSSTTSTISIRKEEKKESPEGGKGGSSGQPKTSKPGDQEKISQKAAAN.

The segment at 1-91 (MTSRELYTSS…KIVRTNEKEQ (91 aa)) is head. The region spanning 88–399 (EKEQLQGLND…KLLEGEETRL (312 aa)) is the IF rod domain. The interval 91-123 (QLQGLNDRFVTYIEKVHHLEQQNKLLESEVTLL) is coil 1A. The segment at 121–136 (TLLRQKHSEPSRLSHI) is linker 1. The coil 1B stretch occupies residues 137-232 (YEQEIRELRS…KVHEEEIAEL (96 aa)). Residues 233-251 (QASVQEAQISVEMDVVSKP) are linker 12. The tract at residues 252–270 (DLTAALKEIRMQYEVLSAR) is coil 2A. The segment at 271–279 (NQQSSEEWY) is linker 2. The interval 280-395 (QAKIANVSLE…AAYRKLLEGE (116 aa)) is coil 2B. Residues 396–470 (ETRLTSVGGG…EKISQKAAAN (75 aa)) are tail. Residues 414–431 (FSSGSYSGGRSSTTSTIS) show a composition bias toward low complexity. Residues 414–470 (FSSGSYSGGRSSTTSTISIRKEEKKESPEGGKGGSSGQPKTSKPGDQEKISQKAAAN) form a disordered region. Positions 432 to 442 (IRKEEKKESPE) are enriched in basic and acidic residues.

It belongs to the intermediate filament family. As to expression, nervous system; in axons in the PNS and in small perikarya in the dorsal root ganglion.

The protein is Low molecular weight neuronal intermediate filament of Xenopus laevis (African clawed frog).